The primary structure comprises 500 residues: Small ribosomal subunit protein uS3m (500 aa).

The protein belongs to the universal ribosomal protein uS3 family.

Its subcellular location is the mitochondrion. This Prototheca wickerhamii protein is Small ribosomal subunit protein uS3m (RPS3).